The chain runs to 568 residues: 2-succinyl-5-enolpyruvyl-6-hydroxy-3-cyclohexene-1-carboxylate synthase (568 aa).

The protein belongs to the TPP enzyme family. MenD subfamily. Homodimer. The cofactor is Mg(2+). Mn(2+) is required as a cofactor. Requires thiamine diphosphate as cofactor.

It catalyses the reaction isochorismate + 2-oxoglutarate + H(+) = 5-enolpyruvoyl-6-hydroxy-2-succinyl-cyclohex-3-ene-1-carboxylate + CO2. Its pathway is quinol/quinone metabolism; 1,4-dihydroxy-2-naphthoate biosynthesis; 1,4-dihydroxy-2-naphthoate from chorismate: step 2/7. The protein operates within quinol/quinone metabolism; menaquinone biosynthesis. Its function is as follows. Catalyzes the thiamine diphosphate-dependent decarboxylation of 2-oxoglutarate and the subsequent addition of the resulting succinic semialdehyde-thiamine pyrophosphate anion to isochorismate to yield 2-succinyl-5-enolpyruvyl-6-hydroxy-3-cyclohexene-1-carboxylate (SEPHCHC). The protein is 2-succinyl-5-enolpyruvyl-6-hydroxy-3-cyclohexene-1-carboxylate synthase of Actinobacillus pleuropneumoniae serotype 3 (strain JL03).